A 166-amino-acid polypeptide reads, in one-letter code: Interferon gamma (166 aa).

The signal sequence occupies residues 1 to 23 (MKYTSYFLALLLCGLLGFSGSYG). Q24 carries the post-translational modification Pyrrolidone carboxylic acid. Residues N39 and N106 are each glycosylated (N-linked (GlcNAc...) asparagine).

It belongs to the type II (or gamma) interferon family. Homodimer. Interacts with IFNGR1 (via extracellular domain); this interaction promotes IFNGR1 dimerization. In terms of tissue distribution, released primarily from activated T lymphocytes.

It is found in the secreted. Type II interferon produced by immune cells such as T-cells and NK cells that plays crucial roles in antimicrobial, antiviral, and antitumor responses by activating effector immune cells and enhancing antigen presentation. Primarily signals through the JAK-STAT pathway after interaction with its receptor IFNGR1 to affect gene regulation. Upon IFNG binding, IFNGR1 intracellular domain opens out to allow association of downstream signaling components JAK2, JAK1 and STAT1, leading to STAT1 activation, nuclear translocation and transcription of IFNG-regulated genes. Many of the induced genes are transcription factors such as IRF1 that are able to further drive regulation of a next wave of transcription. Plays a role in class I antigen presentation pathway by inducing a replacement of catalytic proteasome subunits with immunoproteasome subunits. In turn, increases the quantity, quality, and repertoire of peptides for class I MHC loading. Increases the efficiency of peptide generation also by inducing the expression of activator PA28 that associates with the proteasome and alters its proteolytic cleavage preference. Up-regulates as well MHC II complexes on the cell surface by promoting expression of several key molecules such as cathepsins B/CTSB, H/CTSH, and L/CTSL. Participates in the regulation of hematopoietic stem cells during development and under homeostatic conditions by affecting their development, quiescence, and differentiation. This chain is Interferon gamma (IFNG), found in Bos taurus (Bovine).